Reading from the N-terminus, the 726-residue chain is Dipeptidyl-peptidase 5 (726 aa).

The first 19 residues, 1–19 (MAAAKWLIASLAFASSGLA), serve as a signal peptide directing secretion. 2 N-linked (GlcNAc...) asparagine glycosylation sites follow: Asn96 and Asn252. Residues 269–291 (AEPINKRNGPRTPQAIEGASSSP) are disordered. The Charge relay system role is filled by Ser558. N-linked (GlcNAc...) asparagine glycosylation is present at Asn605. Catalysis depends on charge relay system residues Asp641 and His673. Asn699 is a glycosylation site (N-linked (GlcNAc...) asparagine).

This sequence belongs to the peptidase S9C family.

Its subcellular location is the secreted. Its function is as follows. Extracellular dipeptidyl-peptidase which removes N-terminal dipeptides sequentially from polypeptides having unsubstituted N-termini. Contributes to pathogenicity. This is Dipeptidyl-peptidase 5 (DPP5) from Trichophyton equinum (Horse ringworm fungus).